Here is a 245-residue protein sequence, read N- to C-terminus: Zinc import ATP-binding protein ZnuC (245 aa).

Residues 27-244 form the ABC transporter domain; that stretch reads LTADSLTLFY…AKFLSVFPNN (218 aa). 59–66 contributes to the ATP binding site; it reads GPNGGGKT.

Belongs to the ABC transporter superfamily. Zinc importer (TC 3.A.1.15.5) family. As to quaternary structure, the complex is composed of two ATP-binding proteins (ZnuC), two transmembrane proteins (ZnuB) and a solute-binding protein (ZnuA).

Its subcellular location is the cell inner membrane. It catalyses the reaction Zn(2+)(out) + ATP(in) + H2O(in) = Zn(2+)(in) + ADP(in) + phosphate(in) + H(+)(in). Part of the ABC transporter complex ZnuABC involved in zinc import. Responsible for energy coupling to the transport system. The chain is Zinc import ATP-binding protein ZnuC from Anaplasma marginale (strain St. Maries).